The sequence spans 160 residues: Gene 34 protein (160 aa).

A compositionally biased stretch (polar residues) spans 1 to 11 (MDSPRGISTAT). Residues 1-26 (MDSPRGISTATGDAHAEAAVSPAAEI) are disordered.

The chain is Gene 34 protein from Equus caballus (Horse).